Reading from the N-terminus, the 159-residue chain is Sulfur carrier protein DsrE2 (159 aa).

The next 2 helical transmembrane spans lie at 21–43 and 72–91; these read PFILASTAAALGYEVQVFFTFYG and WFPVLGLALPGMQGMMTAMM.

Its subcellular location is the cell membrane. It participates in energy metabolism; sulfur metabolism. Its function is as follows. Sulfur carrier protein probably involved in sulfur trafficking for oxidative dissimilatory sulfur metabolism. May be a component of a cytoplasmic sulfur relay system delivering sulfur to DsrC. Binds sulfur in the presence of sulfide in vitro. The chain is Sulfur carrier protein DsrE2 from Allochromatium vinosum (strain ATCC 17899 / DSM 180 / NBRC 103801 / NCIMB 10441 / D) (Chromatium vinosum).